The chain runs to 374 residues: Guanine nucleotide-binding protein subunit alpha-15 (374 aa).

The G-alpha domain maps to 41-374; it reads GELKLLLLGT…ARYLDEINLL (334 aa). The G1 motif stretch occupies residues 44–57; sequence KLLLLGTGESGKST. GTP contacts are provided by residues 49–56, 183–189, 208–212, 277–280, and alanine 346; these read GTGESGKS, LRSRMPT, DVGGQ, and NKTD. Serine 56 and threonine 189 together coordinate Mg(2+). Residues 181-189 form a G2 motif region; it reads DVLRSRMPT. Residues 204–213 form a G3 motif region; sequence LRIVDVGGQK. Positions 273-280 are G4 motif; it reads ILFLNKTD. Residues 344-349 form a G5 motif region; the sequence is TCATDT.

This sequence belongs to the G-alpha family. G(q) subfamily. In terms of assembly, g proteins are composed of 3 units; alpha, beta and gamma. The alpha chain contains the guanine nucleotide binding site.

Guanine nucleotide-binding proteins (G proteins) are involved as modulators or transducers in various transmembrane signaling systems. The polypeptide is Guanine nucleotide-binding protein subunit alpha-15 (GNA15) (Oryctolagus cuniculus (Rabbit)).